Reading from the N-terminus, the 750-residue chain is MLRVKNQLFLLSPHYLKQVKESSGSRLIRQRFLHQQQPLHPEWAALAKRQLKGKNPEDLIWHTPEGISIKPLYSKRDTTDLPEELPGVKPFTRGPYPTMYTFRPWTIRQYAGFSTVEESNKFYKDNIKAGQQGLSVAFDLATHRGYDSDNPRVRGDVGMAGVAIDTVEDTKILFDGIPLEKMSVSMTMNGAVIPVLANFIVTGEEQGVPKEKLTGTIQNDILKEFMVRNTYIFPPEPSMKIIADIFQYTSKHMPKFNSISISGYHMQEAGADAILELAYTLADGLEYSRTGLQAGLTIDEFAPRLSFFWGIGMNFYMEIAKMRAGRRLWAHLIEKMFQPKSSKSLLLRAHCQTSGWSLTEQDPYNNIVRTAIEAMAAVFGGTQSLHTNSFDEALGLPTVKSARIARNTQIIIQEESGIPKVADPWGGSYMMESLTNDVYDAALKLINEIEEMGGMAKAVAEGIPKLRIEECAARRQARIDSGSEVIVGVNKYQLEKEDAVEVLAIDNTSVRNRQIEKLQKIKSSRDQALAERCLAALTECAASGDGNILALAVDASRARCTVGEITDALKKVFGEHKANDRMVSGAYRQEFGESKEITSAIKRVHKFMEREGRRPRLLVAKMGQDGHDRGAKVIATGFADLGFDVDIGPLFQTPREVAQQAVDADVHAVGVSTLAAGHKTLVPELIKELNSLGRPDILVMCGGVIPPQDYEFLFEVGVSNVFGPGTRIPKAAVQVLDDIEKCLEKKQQSV.

The N-terminal 32 residues, Met1–Phe32, are a transit peptide targeting the mitochondrion. Gln50 is a binding site for malonyl-CoA. Lys89 carries the N6-acetyllysine modification. Malonyl-CoA contacts are provided by residues Tyr96–Met99 and Thr106–Tyr110. Lys212 carries the N6-acetyllysine modification. Malonyl-CoA contacts are provided by residues Thr216–Gln218, Arg228, Lys255, His265, and Arg304–Ser306. Lys335 carries the post-translational modification N6-acetyllysine. Lys343 bears the N6-succinyllysine mark. Residue Ser481 is modified to Phosphoserine. Lys595 is subject to N6-succinyllysine. N6-acetyllysine is present on Lys602. Residues Arg614–Lys746 form the B12-binding domain. His627 is a binding site for adenosylcob(III)alamin.

The protein belongs to the methylmalonyl-CoA mutase family. Homodimer. Interacts (the apoenzyme form) with MMAA; the interaction is GTP dependent. Requires adenosylcob(III)alamin as cofactor.

It is found in the mitochondrion matrix. Its subcellular location is the mitochondrion. It localises to the cytoplasm. The catalysed reaction is (R)-methylmalonyl-CoA = succinyl-CoA. Its activity is regulated as follows. Inhibited by itaconyl-CoA, a metabolite that inactivates the coenzyme B12 cofactor. In terms of biological role, catalyzes the reversible isomerization of methylmalonyl-CoA (MMCoA) (generated from branched-chain amino acid metabolism and degradation of dietary odd chain fatty acids and cholesterol) to succinyl-CoA (3-carboxypropionyl-CoA), a key intermediate of the tricarboxylic acid cycle. This Macaca fascicularis (Crab-eating macaque) protein is Methylmalonyl-CoA mutase, mitochondrial (MMUT).